A 164-amino-acid chain; its full sequence is MAEDNNQAAQGGNDAQNQLQFSMQRIYVKDISFESPNAPSVFQNAFKPKVGLDLNTTHKQVGENLYEVVVKVTAQVTNNEDGATAFLAEVEQAGLFRIAGLSDDQLDHTLGAFCPNMLFPYARECIDNLVNRGSFPPLMLSPVNFEGMYAQKKKRESEAAENAH.

It belongs to the SecB family. In terms of assembly, homotetramer, a dimer of dimers. One homotetramer interacts with 1 SecA dimer.

Its subcellular location is the cytoplasm. In terms of biological role, one of the proteins required for the normal export of preproteins out of the cell cytoplasm. It is a molecular chaperone that binds to a subset of precursor proteins, maintaining them in a translocation-competent state. It also specifically binds to its receptor SecA. The chain is Protein-export protein SecB from Chromohalobacter salexigens (strain ATCC BAA-138 / DSM 3043 / CIP 106854 / NCIMB 13768 / 1H11).